A 306-amino-acid polypeptide reads, in one-letter code: tRNA dimethylallyltransferase (306 aa).

Residue 9–16 (GPTAIGKT) coordinates ATP. 11-16 (TAIGKT) is a binding site for substrate. An interaction with substrate tRNA region spans residues 34-37 (DSMQ).

This sequence belongs to the IPP transferase family. Monomer. Mg(2+) serves as cofactor.

The catalysed reaction is adenosine(37) in tRNA + dimethylallyl diphosphate = N(6)-dimethylallyladenosine(37) in tRNA + diphosphate. In terms of biological role, catalyzes the transfer of a dimethylallyl group onto the adenine at position 37 in tRNAs that read codons beginning with uridine, leading to the formation of N6-(dimethylallyl)adenosine (i(6)A). This Lactobacillus helveticus (strain DPC 4571) protein is tRNA dimethylallyltransferase.